We begin with the raw amino-acid sequence, 64 residues long: MMKANELREKSAQQLNEQLLGLLRDQFNLRMQKATGQLGQSHLLSQVKRDIARVKTVLNQQAGK.

Belongs to the universal ribosomal protein uL29 family.

The protein is Large ribosomal subunit protein uL29 of Pseudomonas entomophila (strain L48).